The chain runs to 400 residues: Nicotinate phosphoribosyltransferase (400 aa).

His-220 is subject to Phosphohistidine; by autocatalysis.

It belongs to the NAPRTase family. In terms of processing, transiently phosphorylated on a His residue during the reaction cycle. Phosphorylation strongly increases the affinity for substrates and increases the rate of nicotinate D-ribonucleotide production. Dephosphorylation regenerates the low-affinity form of the enzyme, leading to product release.

The enzyme catalyses nicotinate + 5-phospho-alpha-D-ribose 1-diphosphate + ATP + H2O = nicotinate beta-D-ribonucleotide + ADP + phosphate + diphosphate. It functions in the pathway cofactor biosynthesis; NAD(+) biosynthesis; nicotinate D-ribonucleotide from nicotinate: step 1/1. Its function is as follows. Catalyzes the synthesis of beta-nicotinate D-ribonucleotide from nicotinate and 5-phospho-D-ribose 1-phosphate at the expense of ATP. In Escherichia coli (strain K12 / MC4100 / BW2952), this protein is Nicotinate phosphoribosyltransferase.